The sequence spans 81 residues: UPF0434 protein msl4429 (81 aa).

Belongs to the UPF0434 family.

This chain is UPF0434 protein msl4429, found in Mesorhizobium japonicum (strain LMG 29417 / CECT 9101 / MAFF 303099) (Mesorhizobium loti (strain MAFF 303099)).